The sequence spans 68 residues: Translational regulator CsrA 1 (68 aa).

It belongs to the CsrA/RsmA family. As to quaternary structure, homodimer; the beta-strands of each monomer intercalate to form a hydrophobic core, while the alpha-helices form wings that extend away from the core.

It is found in the cytoplasm. In terms of biological role, a key translational regulator that binds mRNA to regulate translation initiation and/or mRNA stability. Mediates global changes in gene expression, shifting from rapid growth to stress survival by linking envelope stress, the stringent response and the catabolite repression systems. Usually binds in the 5'-UTR; binding at or near the Shine-Dalgarno sequence prevents ribosome-binding, repressing translation, binding elsewhere in the 5'-UTR can activate translation and/or stabilize the mRNA. Its function is antagonized by small RNA(s). The polypeptide is Translational regulator CsrA 1 (Coxiella burnetii (strain RSA 493 / Nine Mile phase I)).